The chain runs to 310 residues: Membrane protein insertase YidC 2 (310 aa).

Positions 1–23 (MKKIYKRLLFSGLALSMLFFLSG) are cleaved as a signal peptide. Cysteine 24 carries N-palmitoyl cysteine lipidation. The S-diacylglycerol cysteine moiety is linked to residue cysteine 24. A run of 5 helical transmembrane segments spans residues 34–54 (GEGW…QYLA), 57–77 (LGLG…LLIL), 136–156 (FGGL…ALYI), 180–200 (IITV…TLSV), and 220–240 (VMIS…SGIF). The tract at residues 263 to 310 (EFKKNPPKPFKSNARKDITPQANNDKKLITSKKQKSNRNAGKQRHHKQ) is disordered. Residues 276-290 (ARKDITPQANNDKKL) are compositionally biased toward basic and acidic residues. The span at 291-310 (ITSKKQKSNRNAGKQRHHKQ) shows a compositional bias: basic residues.

This sequence belongs to the OXA1/ALB3/YidC family. Type 2 subfamily.

It localises to the cell membrane. In terms of biological role, required for the insertion and/or proper folding and/or complex formation of integral membrane proteins into the membrane. Involved in integration of membrane proteins that insert both dependently and independently of the Sec translocase complex, as well as at least some lipoproteins. Partially complements an E.coli yidC depletion experiment. The protein is Membrane protein insertase YidC 2 (yidC2) of Streptococcus mutans serotype c (strain ATCC 700610 / UA159).